The following is a 327-amino-acid chain: Tetraacyldisaccharide 4'-kinase (327 aa).

ATP is bound at residue 52–59 (TLGGAGKT).

Belongs to the LpxK family.

The enzyme catalyses a lipid A disaccharide + ATP = a lipid IVA + ADP + H(+). Its pathway is glycolipid biosynthesis; lipid IV(A) biosynthesis; lipid IV(A) from (3R)-3-hydroxytetradecanoyl-[acyl-carrier-protein] and UDP-N-acetyl-alpha-D-glucosamine: step 6/6. Functionally, transfers the gamma-phosphate of ATP to the 4'-position of a tetraacyldisaccharide 1-phosphate intermediate (termed DS-1-P) to form tetraacyldisaccharide 1,4'-bis-phosphate (lipid IVA). In Methylorubrum extorquens (strain PA1) (Methylobacterium extorquens), this protein is Tetraacyldisaccharide 4'-kinase.